The following is a 491-amino-acid chain: Putative mannan endo-1,4-beta-mannosidase 5 (491 aa).

The N-terminal stretch at 1–31 (METSYREEEARRKASLLHCIFFFLLGALAMA) is a signal peptide. Trp134 and Asn248 together coordinate substrate. Glu249 acts as the Proton donor in catalysis. Substrate is bound at residue Tyr330. Catalysis depends on Glu372, which acts as the Nucleophile. Asn385 carries N-linked (GlcNAc...) asparagine glycosylation. Trp416 provides a ligand contact to substrate. Asn471 is a glycosylation site (N-linked (GlcNAc...) asparagine).

Belongs to the glycosyl hydrolase 5 (cellulase A) family. Expression not detected.

It is found in the secreted. It carries out the reaction Random hydrolysis of (1-&gt;4)-beta-D-mannosidic linkages in mannans, galactomannans and glucomannans.. The polypeptide is Putative mannan endo-1,4-beta-mannosidase 5 (MAN5) (Oryza sativa subsp. japonica (Rice)).